A 337-amino-acid polypeptide reads, in one-letter code: Beta-ketoacyl-[acyl-carrier-protein] synthase III (337 aa).

Active-site residues include Cys-119 and His-260. Residues Gln-261–Arg-265 are ACP-binding. The active site involves Asn-290.

This sequence belongs to the thiolase-like superfamily. FabH family. In terms of assembly, homodimer.

It localises to the cytoplasm. The catalysed reaction is malonyl-[ACP] + acetyl-CoA + H(+) = 3-oxobutanoyl-[ACP] + CO2 + CoA. The protein operates within lipid metabolism; fatty acid biosynthesis. Its function is as follows. Catalyzes the condensation reaction of fatty acid synthesis by the addition to an acyl acceptor of two carbons from malonyl-ACP. Catalyzes the first condensation reaction which initiates fatty acid synthesis and may therefore play a role in governing the total rate of fatty acid production. Possesses both acetoacetyl-ACP synthase and acetyl transacylase activities. Its substrate specificity determines the biosynthesis of branched-chain and/or straight-chain of fatty acids. This chain is Beta-ketoacyl-[acyl-carrier-protein] synthase III, found in Synechococcus sp. (strain WH7803).